A 511-amino-acid chain; its full sequence is Bifunctional purine biosynthesis protein PurH (511 aa).

Residues 1 to 144 form the MGS-like domain; sequence MKTALLSVSD…KNFASVLPVV (144 aa).

Belongs to the PurH family.

The catalysed reaction is (6R)-10-formyltetrahydrofolate + 5-amino-1-(5-phospho-beta-D-ribosyl)imidazole-4-carboxamide = 5-formamido-1-(5-phospho-D-ribosyl)imidazole-4-carboxamide + (6S)-5,6,7,8-tetrahydrofolate. The enzyme catalyses IMP + H2O = 5-formamido-1-(5-phospho-D-ribosyl)imidazole-4-carboxamide. The protein operates within purine metabolism; IMP biosynthesis via de novo pathway; 5-formamido-1-(5-phospho-D-ribosyl)imidazole-4-carboxamide from 5-amino-1-(5-phospho-D-ribosyl)imidazole-4-carboxamide (10-formyl THF route): step 1/1. Its pathway is purine metabolism; IMP biosynthesis via de novo pathway; IMP from 5-formamido-1-(5-phospho-D-ribosyl)imidazole-4-carboxamide: step 1/1. This is Bifunctional purine biosynthesis protein PurH from Pediococcus pentosaceus (strain ATCC 25745 / CCUG 21536 / LMG 10740 / 183-1w).